Reading from the N-terminus, the 88-residue chain is Small ribosomal subunit protein bS20 (88 aa).

Disordered regions lie at residues 1 to 23 and 69 to 88; these read MANSPQARKRARQAENRRQHNAA and PNKAARHKSRLNTKIKAMAA. A compositionally biased stretch (basic residues) spans 69–81; the sequence is PNKAARHKSRLNT.

It belongs to the bacterial ribosomal protein bS20 family.

In terms of biological role, binds directly to 16S ribosomal RNA. The sequence is that of Small ribosomal subunit protein bS20 from Alcanivorax borkumensis (strain ATCC 700651 / DSM 11573 / NCIMB 13689 / SK2).